The sequence spans 331 residues: Aflatoxin B1 aldehyde reductase member 4 (331 aa).

NADP(+) is bound at residue D44. Y49 acts as the Proton donor in catalysis. The residue at position 85 (S85) is a Phosphoserine. Position 113 (H113) interacts with substrate. Residues 143–144, Q169, 198–208, and R222 each bind NADP(+); these read SN and NPLAGGLLTGK. Residue Y232 coordinates substrate. 290-298 is a binding site for NADP(+); that stretch reads SSLEQLEQN.

The protein belongs to the aldo/keto reductase family. Aldo/keto reductase 2 subfamily. Mainly expressed in uterus.

Functionally, can reduce the dialdehyde protein-binding form of aflatoxin B1 (AFB1) to the non-binding AFB1 dialcohol. May be involved in protection of liver against the toxic and carcinogenic effects of AFB1, a potent hepatocarcinogen. In Homo sapiens (Human), this protein is Aflatoxin B1 aldehyde reductase member 4 (AKR7L).